A 303-amino-acid polypeptide reads, in one-letter code: Ribonuclease P protein subunit p40 (303 aa).

As to quaternary structure, component of nuclear RNase P and RNase MRP ribonucleoproteins. RNase P consists of a catalytic RNA moiety and about 10 protein subunits; POP1, POP4, POP5, POP7, RPP14, RPP21, RPP25, RPP30, RPP38 and RPP40. Within the RNase P complex, POP1, POP7 and RPP25 form the 'finger' subcomplex, POP5, RPP14, RPP40 and homodimeric RPP30 form the 'palm' subcomplex, and RPP21, POP4 and RPP38 form the 'wrist' subcomplex. All subunits of the RNase P complex interact with the catalytic RNA. Several subunits of RNase P are also part of the RNase MRP complex. RNase MRP consists of a catalytic RNA moiety and about 8 protein subunits; POP1, POP7, RPP25, RPP30, RPP38, RPP40 and possibly also POP4 and POP5.

It is found in the nucleus. The protein localises to the nucleolus. In terms of biological role, component of ribonuclease P, a ribonucleoprotein complex that generates mature tRNA molecules by cleaving their 5'-ends. Also a component of the MRP ribonuclease complex, which cleaves pre-rRNA sequences. In Bos taurus (Bovine), this protein is Ribonuclease P protein subunit p40 (RPP40).